The sequence spans 322 residues: 4-hydroxythreonine-4-phosphate dehydrogenase (322 aa).

Thr132 provides a ligand contact to substrate. A divalent metal cation-binding residues include His160, His205, and His260. Substrate contacts are provided by Lys268, Asn277, and Arg286.

It belongs to the PdxA family. Homodimer. Zn(2+) is required as a cofactor. The cofactor is Mg(2+). It depends on Co(2+) as a cofactor.

The protein localises to the cytoplasm. It carries out the reaction 4-(phosphooxy)-L-threonine + NAD(+) = 3-amino-2-oxopropyl phosphate + CO2 + NADH. It functions in the pathway cofactor biosynthesis; pyridoxine 5'-phosphate biosynthesis; pyridoxine 5'-phosphate from D-erythrose 4-phosphate: step 4/5. Catalyzes the NAD(P)-dependent oxidation of 4-(phosphooxy)-L-threonine (HTP) into 2-amino-3-oxo-4-(phosphooxy)butyric acid which spontaneously decarboxylates to form 3-amino-2-oxopropyl phosphate (AHAP). This is 4-hydroxythreonine-4-phosphate dehydrogenase from Xanthomonas campestris pv. campestris (strain B100).